Consider the following 378-residue polypeptide: Protein RecA (378 aa).

Position 79–86 (79–86) interacts with ATP; the sequence is GPESSGKT.

It belongs to the RecA family.

The protein resides in the cytoplasm. Functionally, can catalyze the hydrolysis of ATP in the presence of single-stranded DNA, the ATP-dependent uptake of single-stranded DNA by duplex DNA, and the ATP-dependent hybridization of homologous single-stranded DNAs. It interacts with LexA causing its activation and leading to its autocatalytic cleavage. This chain is Protein RecA, found in Streptococcus pyogenes serotype M12 (strain MGAS2096).